Consider the following 367-residue polypeptide: 2-aminoethylphosphonate--pyruvate transaminase (367 aa).

Lys-194 carries the post-translational modification N6-(pyridoxal phosphate)lysine.

The protein belongs to the class-V pyridoxal-phosphate-dependent aminotransferase family. PhnW subfamily. As to quaternary structure, homodimer. The cofactor is pyridoxal 5'-phosphate.

The catalysed reaction is (2-aminoethyl)phosphonate + pyruvate = phosphonoacetaldehyde + L-alanine. Functionally, involved in phosphonate degradation. The protein is 2-aminoethylphosphonate--pyruvate transaminase of Salmonella paratyphi B (strain ATCC BAA-1250 / SPB7).